The sequence spans 117 residues: Large-conductance mechanosensitive channel (117 aa).

Helical transmembrane passes span E7 to F27, I30 to V50, and G64 to V84.

This sequence belongs to the MscL family. In terms of assembly, homopentamer.

It localises to the cell membrane. Channel that opens in response to stretch forces in the membrane lipid bilayer. May participate in the regulation of osmotic pressure changes within the cell. In Staphylococcus haemolyticus (strain JCSC1435), this protein is Large-conductance mechanosensitive channel.